Here is a 507-residue protein sequence, read N- to C-terminus: ATP synthase subunit alpha (507 aa).

170–177 (GDRQTGKT) is a binding site for ATP.

This sequence belongs to the ATPase alpha/beta chains family. In terms of assembly, F-type ATPases have 2 components, CF(1) - the catalytic core - and CF(0) - the membrane proton channel. CF(1) has five subunits: alpha(3), beta(3), gamma(1), delta(1), epsilon(1). CF(0) has three main subunits: a(1), b(2) and c(9-12). The alpha and beta chains form an alternating ring which encloses part of the gamma chain. CF(1) is attached to CF(0) by a central stalk formed by the gamma and epsilon chains, while a peripheral stalk is formed by the delta and b chains.

Its subcellular location is the cell inner membrane. It carries out the reaction ATP + H2O + 4 H(+)(in) = ADP + phosphate + 5 H(+)(out). Its function is as follows. Produces ATP from ADP in the presence of a proton gradient across the membrane. The alpha chain is a regulatory subunit. The sequence is that of ATP synthase subunit alpha from Thermosipho africanus (strain TCF52B).